The sequence spans 156 residues: 6,7-dimethyl-8-ribityllumazine synthase (156 aa).

Residues F23, 57–59 (AFE), and 81–83 (TVI) each bind 5-amino-6-(D-ribitylamino)uracil. Position 86–87 (86–87 (ST)) interacts with (2S)-2-hydroxy-3-oxobutyl phosphate. H89 functions as the Proton donor in the catalytic mechanism. F114 contributes to the 5-amino-6-(D-ribitylamino)uracil binding site. R128 lines the (2S)-2-hydroxy-3-oxobutyl phosphate pocket.

It belongs to the DMRL synthase family. Forms an icosahedral capsid composed of 60 subunits, arranged as a dodecamer of pentamers.

The enzyme catalyses (2S)-2-hydroxy-3-oxobutyl phosphate + 5-amino-6-(D-ribitylamino)uracil = 6,7-dimethyl-8-(1-D-ribityl)lumazine + phosphate + 2 H2O + H(+). The protein operates within cofactor biosynthesis; riboflavin biosynthesis; riboflavin from 2-hydroxy-3-oxobutyl phosphate and 5-amino-6-(D-ribitylamino)uracil: step 1/2. In terms of biological role, catalyzes the formation of 6,7-dimethyl-8-ribityllumazine by condensation of 5-amino-6-(D-ribitylamino)uracil with 3,4-dihydroxy-2-butanone 4-phosphate. This is the penultimate step in the biosynthesis of riboflavin. The polypeptide is 6,7-dimethyl-8-ribityllumazine synthase (Halalkalibacterium halodurans (strain ATCC BAA-125 / DSM 18197 / FERM 7344 / JCM 9153 / C-125) (Bacillus halodurans)).